Reading from the N-terminus, the 214-residue chain is Probable adenylyl-sulfate kinase (214 aa).

ATP is bound at residue 13–20 (GLSGAGKT). Catalysis depends on Ser87, which acts as the Phosphoserine intermediate. Residues 174–199 (WNRTNTFPLKSRPNPPHRHKSKSSRA) form a disordered region.

The protein belongs to the APS kinase family.

It catalyses the reaction adenosine 5'-phosphosulfate + ATP = 3'-phosphoadenylyl sulfate + ADP + H(+). It functions in the pathway sulfur metabolism; hydrogen sulfide biosynthesis; sulfite from sulfate: step 2/3. In terms of biological role, catalyzes the synthesis of activated sulfate. This Pseudomonas aeruginosa protein is Probable adenylyl-sulfate kinase.